A 34-amino-acid polypeptide reads, in one-letter code: Antimicrobial peptide Alo-1 (34 aa).

3 disulfide bridges follow: Cys1–Cys18, Cys8–Cys22, and Cys17–Cys33.

The protein resides in the secreted. Its function is as follows. Has antifungal activity against C.glabrata. This is Antimicrobial peptide Alo-1 from Acrocinus longimanus (Giant harlequin beetle).